The following is a 252-amino-acid chain: 2-succinyl-6-hydroxy-2,4-cyclohexadiene-1-carboxylate synthase (252 aa).

It belongs to the AB hydrolase superfamily. MenH family. In terms of assembly, monomer.

It catalyses the reaction 5-enolpyruvoyl-6-hydroxy-2-succinyl-cyclohex-3-ene-1-carboxylate = (1R,6R)-6-hydroxy-2-succinyl-cyclohexa-2,4-diene-1-carboxylate + pyruvate. Its pathway is quinol/quinone metabolism; 1,4-dihydroxy-2-naphthoate biosynthesis; 1,4-dihydroxy-2-naphthoate from chorismate: step 3/7. It participates in quinol/quinone metabolism; menaquinone biosynthesis. Catalyzes a proton abstraction reaction that results in 2,5-elimination of pyruvate from 2-succinyl-5-enolpyruvyl-6-hydroxy-3-cyclohexene-1-carboxylate (SEPHCHC) and the formation of 2-succinyl-6-hydroxy-2,4-cyclohexadiene-1-carboxylate (SHCHC). The chain is 2-succinyl-6-hydroxy-2,4-cyclohexadiene-1-carboxylate synthase from Salmonella paratyphi A (strain ATCC 9150 / SARB42).